The primary structure comprises 254 residues: uncharacterized protein (254 aa).

5 helical membrane-spanning segments follow: residues 33–53 (MLWV…LFFI), 70–90 (FNKL…LFKS), 92–112 (FALS…LNFM), 133–153 (FIIF…ILLI), and 223–243 (FLVF…PLIF).

The protein to M.jannaschii MJ0902.

The protein localises to the cell membrane. This is an uncharacterized protein from Methanocaldococcus jannaschii (strain ATCC 43067 / DSM 2661 / JAL-1 / JCM 10045 / NBRC 100440) (Methanococcus jannaschii).